The sequence spans 963 residues: MADSDDEYDRKRRDKFRGERDSYRPERRDERRPMGGGANSRDEWSERNPFRGSSAAGGGGGGGARHRPDYSDYRGSGPRPRYGSPGREMPPAKRMRPDWGESEMRSNPRFGYDPYLVQAWNDHYQSLHSAYSHSSHPSSARESAPNVVNSDTQTQPAMLTLKQFLDTQDENISDSEVMRKYTEYKTDFKRQQLNEFFVAHKDEEWFKNKYHPEDSVRRSEEQRGFLKRRTDVFLELLENGTIGSVKVDSSQADSLVRVLDTCVIKLEGGTDEDLKILDEKPKETPVVYERKSESTEASVVAKREPESPKQTKSEKGADEEQPVVVSPQRKSLRPVNSDEENWDDENDEMAAPAKVQGDDDSIKSGSDKKLKKKKIKKRNRNSSDDESSSSSSFESDSDSDDEKLKAKYDVEEGLRADQKAEAQKDKEEAATVAKANPLPPDSPQPEGGTALQDAAAIKSEQSDEQQEKDAEQPAELQADEPAAAKNGEEPEKTEKNEVETKSTADDVTETIDLDKVKDGPQPRALHRTSSIFLRNLAPSITKAEIEAICTRFSGYLRVAIADPLVERRWYRRGWITFTRDVNIKEICWSLNNQRLRDCEMGAIVNRDLSRRVRPANGITAHKQIVRADIKLCAKIAMNLDERFKLWSEADSTQQQPDAESKPSADATNGSGGSSTTYGFNSKNPVLQNITDYLIEEASAEEEELLGLAGDNKDGEGEPIERDEQLISVLDRLVLYLRIVHSVDYYNHCEYPYEDEMPNRCGIIHARGPPPMRVTSNDVQEYIKAYDGKLQQFLTKSVQLSDDEIKELGAKNPETEVEKFVQANTQELAKDKWLCPLSGKKFKGPEFIRKHIFNKHEEKVDEVRKEVQYFNNYLRDPKRPQLPEHPGSSKRTESESGRGSGGYRPPMYPPFSAMPYGFAPPMMGGGGRGGRNFPPVRREMPLEHQRRLIGYHDLDAPVNSDMFD.

Disordered stretches follow at residues 1–108 (MADS…RSNP), 129–151 (SAYS…VNSD), 283–522 (ETPV…GPQP), 648–680 (EADS…YGFN), and 871–905 (NYLR…YRPP). Composition is skewed to basic and acidic residues over residues 8–33 (YDRK…ERRP) and 40–49 (SRDEWSERNP). The span at 73–87 (YRGSGPRPRYGSPGR) shows a compositional bias: low complexity. Tyrosine 82 bears the Phosphotyrosine mark. The residue at position 84 (serine 84) is a Phosphoserine. Positions 95–106 (MRPDWGESEMRS) are enriched in basic and acidic residues. A compositionally biased stretch (low complexity) spans 129–144 (SAYSHSSHPSSARESA). 2 stretches are compositionally biased toward basic and acidic residues: residues 283-294 (ETPVVYERKSES) and 301-318 (AKRE…KGAD). A phosphoserine mark is found at serine 307, serine 337, and serine 361. Acidic residues predominate over residues 337–348 (SDEENWDDENDE). Positions 356-368 (QGDDDSIKSGSDK) are enriched in basic and acidic residues. Residues 369-380 (KLKKKKIKKRNR) are compositionally biased toward basic residues. Residues 402–429 (EKLKAKYDVEEGLRADQKAEAQKDKEEA) show a composition bias toward basic and acidic residues. Phosphoserine is present on serine 442. Basic and acidic residues predominate over residues 486–504 (NGEEPEKTEKNEVETKSTA).

This sequence belongs to the ARS2 family. Interacts with cbp20, Dcr-2 and pasha.

It is found in the nucleus. Functionally, acts as a mediator between the cap-binding complex (CBC) and RNA-mediated gene silencing (RNAi). Involved in innate immunity via the short interfering RNAs (siRNAs) processing machinery by restricting the viral RNA production. Also involved microRNA (miRNA)-mediated silencing by contributing to the stability and delivery of primary miRNA transcripts to the primary miRNA processing complex containing drosha and pasha. The chain is Serrate RNA effector molecule homolog (Ars2) from Drosophila virilis (Fruit fly).